A 1348-amino-acid polypeptide reads, in one-letter code: ABC multidrug transporter atrD (1348 aa).

Over residues 1-10 (MSPLETNPLS) the composition is skewed to polar residues. Residues 1-67 (MSPLETNPLS…HRPKSSSSNN (67 aa)) are disordered. The segment covering 20–31 (ETSTTEEQASTP) has biased composition (low complexity). N-linked (GlcNAc...) asparagine glycosylation is present at asparagine 99. The next 4 helical transmembrane spans lie at 114–134 (ILIM…LPLF), 168–188 (YFVY…VGFI), 240–260 (KVGL…IAYV), and 268–288 (ICSS…QFII). In terms of domain architecture, ABC transmembrane type-1 1 spans 118–408 (VISTICAIAA…VSPNAQAFTN (291 aa)). A glycan (N-linked (GlcNAc...) asparagine) is linked at asparagine 314. Helical transmembrane passes span 344-364 (IVMG…YGLG) and 371-391 (FLVD…AILI). Residues 443–688 (IELRNVKHIY…GGAYRKLVEA (246 aa)) enclose the ABC transporter 1 domain. 478–485 (GPSGSGKS) lines the ATP pocket. Asparagine 550 carries N-linked (GlcNAc...) asparagine glycosylation. 2 helical membrane-spanning segments follow: residues 778 to 798 (MLIG…QAVL) and 825 to 845 (LMFF…GAAF). One can recognise an ABC transmembrane type-1 2 domain in the interval 779-1068 (LIGLVFSVLA…VFSFAPDMGK (290 aa)). N-linked (GlcNAc...) asparagine glycosylation occurs at asparagine 877. 4 consecutive transmembrane segments (helical) span residues 892–912 (HLSG…TTLG), 925–947 (LALV…FYML), 1015–1035 (ALVF…LGHH), and 1042–1062 (FFVC…VFSF). A glycan (N-linked (GlcNAc...) asparagine) is linked at asparagine 1088. Residues 1103–1341 (IEFRNVHFRY…KGRYYELVNL (239 aa)) form the ABC transporter 2 domain. 1138-1145 (GPSGCGKS) is an ATP binding site.

The protein belongs to the ABC transporter superfamily. ABCB family. Multidrug resistance exporter (TC 3.A.1.201) subfamily.

Its subcellular location is the cell membrane. Its activity is regulated as follows. Fenamirol efflux transporter activity is inhibited by the cyclosporin derivative PSC 833, nigericin, reserpine and valinomycin. The effect of reserpine is transiant, while that of the cyclosporin derivative PSC 833, nigericin and valinomycin is proportional to the time of exposure. Cyclohexinmide has inhibitory effect only when applied prior to addition of the fungicide. In terms of biological role, pleiotropic ABC efflux transporter involved in the protection of the cells against a wide range of toxic compounds. Confers resistance to the azole fenarimol via efflux transport. May also be involved in the secretion of penicillin. In Emericella nidulans (Aspergillus nidulans), this protein is ABC multidrug transporter atrD.